Here is a 1088-residue protein sequence, read N- to C-terminus: DNA ligase 4 (1088 aa).

2 disordered regions span residues 1-56 (MALS…KFND) and 73-117 (TTTT…TTTT). 2 stretches are compositionally biased toward low complexity: residues 25–53 (DFKN…YNNK) and 73–90 (TTTT…INKT). Positions 95 to 105 (DDIFDDEDEDS) are enriched in acidic residues. The ATP site is built by Glu414, Lys416, Arg421, Glu467, Phe514, Glu574, Lys579, Lys596, and Lys598. The N6-AMP-lysine intermediate role is filled by Lys416. Mg(2+) is bound at residue Glu467. Glu574 lines the Mg(2+) pocket. BRCT domains follow at residues 827–917 (PTQN…PKYM) and 984–1088 (CWWS…EILD).

This sequence belongs to the ATP-dependent DNA ligase family. The cofactor is Mg(2+).

Its subcellular location is the nucleus. The enzyme catalyses ATP + (deoxyribonucleotide)n-3'-hydroxyl + 5'-phospho-(deoxyribonucleotide)m = (deoxyribonucleotide)n+m + AMP + diphosphate.. Its function is as follows. DNA ligase involved in DNA non-homologous end joining (NHEJ); required for double-strand break (DSB) repair. In Dictyostelium discoideum (Social amoeba), this protein is DNA ligase 4 (lig4).